Consider the following 145-residue polypeptide: Leptin (145 aa).

Cys95 and Cys145 are oxidised to a cystine.

Belongs to the leptin family.

The protein resides in the secreted. In terms of biological role, key player in the regulation of energy balance and body weight control. Once released into the circulation, has central and peripheral effects by binding LEPR, found in many tissues, which results in the activation of several major signaling pathways. The polypeptide is Leptin (LEP) (Meleagris gallopavo (Wild turkey)).